The following is a 167-amino-acid chain: MNNETSGKETASAPLCSPKLPVEKVQRIAKNDPEYMDTSDDAFVATAFATEFFVQVLTHESLHRQQQQQQQQVPPLPDELTLSYDDISAAIVHSSDGHLQFLNDVIPTTKNLRLLVEENRVRYTTSVMPPNEVYSAYVVNDTAPKPNIVEIDLDNDEDDDEDVTDQE.

Serine 17 carries the post-translational modification Phosphoserine.

As to quaternary structure, component of the ISW2 complex, which at least consists of ISW2, ITC1, DLS1 and DPB4.

The protein localises to the nucleus. Functionally, functions as a component of the ISW2 complex, which acts in remodeling the chromatin by catalyzing an ATP-dependent alteration in the structure of nucleosomal DNA. The ISW2 complex is involved in coordinating transcriptional repression and in inheritance of telomeric silencing. It is involved in repression of MAT a-specific genes, INO1, and early meiotic genes during mitotic growth dependent upon transcription factor UME6 and in a parallel pathway to the RPD3-SIN3 histone deacetylase complex. DLS1 is partially required for the ISW2 complex chromatin remodeling activity and is not required for its interaction with chromatin. The polypeptide is Protein DLS1 (DLS1) (Saccharomyces cerevisiae (strain ATCC 204508 / S288c) (Baker's yeast)).